The primary structure comprises 83 residues: Exodeoxyribonuclease 7 small subunit (83 aa).

The protein belongs to the XseB family. Heterooligomer composed of large and small subunits.

It is found in the cytoplasm. The catalysed reaction is Exonucleolytic cleavage in either 5'- to 3'- or 3'- to 5'-direction to yield nucleoside 5'-phosphates.. In terms of biological role, bidirectionally degrades single-stranded DNA into large acid-insoluble oligonucleotides, which are then degraded further into small acid-soluble oligonucleotides. The sequence is that of Exodeoxyribonuclease 7 small subunit from Rhodopseudomonas palustris (strain BisB5).